The sequence spans 47 residues: Delta-actitoxin-Axm1g (47 aa).

3 disulfide bridges follow: cysteine 4–cysteine 44, cysteine 6–cysteine 34, and cysteine 27–cysteine 45.

The protein belongs to the sea anemone sodium channel inhibitory toxin family. Type I subfamily.

It localises to the secreted. The protein resides in the nematocyst. This chain is Delta-actitoxin-Axm1g, found in Anthopleura xanthogrammica (Giant green sea anemone).